The sequence spans 173 residues: Ferric citrate uptake sigma factor FecI (173 aa).

Positions 40–52 (DIAQDTFLRVMVS) match the Polymerase core binding motif. The H-T-H motif DNA-binding region spans 139-158 (YSEIAHKLGVSISSVKKYVA).

It belongs to the sigma-70 factor family. ECF subfamily. Interacts with FecR (via cytoplasmic N-terminus).

Sigma factors are initiation factors that promote the attachment of RNA polymerase to specific initiation sites and are then released. This sigma factor regulates transcriptional activation of the fecABCDE operon which mediates ferric citrate transport. This chain is Ferric citrate uptake sigma factor FecI (fecI), found in Escherichia coli (strain K12).